The primary structure comprises 152 residues: Superoxide dismutase [Cu-Zn] (152 aa).

The Cu cation site is built by histidine 45, histidine 47, and histidine 62. Residues cysteine 56 and cysteine 145 are joined by a disulfide bond. Positions 62, 70, 79, and 82 each coordinate Zn(2+). Histidine 119 contributes to the Cu cation binding site.

This sequence belongs to the Cu-Zn superoxide dismutase family. Homodimer. It depends on Cu cation as a cofactor. Zn(2+) serves as cofactor.

The protein resides in the cytoplasm. The enzyme catalyses 2 superoxide + 2 H(+) = H2O2 + O2. Its function is as follows. Destroys radicals which are normally produced within the cells and which are toxic to biological systems. The chain is Superoxide dismutase [Cu-Zn] (SODCC) from Ipomoea batatas (Sweet potato).